Reading from the N-terminus, the 349-residue chain is ATPase GET3 (349 aa).

ATP is bound at residue 26–33 (KGGVGKTT). D57 is an active-site residue. Residues E240 and N267 each contribute to the ATP site. Zn(2+) is bound by residues C280 and C283.

Belongs to the arsA ATPase family. As to quaternary structure, homodimer. Component of the Golgi to ER traffic (GET) complex, which is composed of GET1, GET2 and GET3. Within the complex, GET1 and GET2 form a heterotetramer which is stabilized by phosphatidylinositol binding and which binds to the GET3 homodimer. Interacts with the chloride channel protein GEF1.

Its subcellular location is the cytoplasm. The protein resides in the endoplasmic reticulum. The protein localises to the golgi apparatus. Its function is as follows. ATPase required for the post-translational delivery of tail-anchored (TA) proteins to the endoplasmic reticulum. Recognizes and selectively binds the transmembrane domain of TA proteins in the cytosol. This complex then targets to the endoplasmic reticulum by membrane-bound receptors GET1 and GET2, where the tail-anchored protein is released for insertion. This process is regulated by ATP binding and hydrolysis. ATP binding drives the homodimer towards the closed dimer state, facilitating recognition of newly synthesized TA membrane proteins. ATP hydrolysis is required for insertion. Subsequently, the homodimer reverts towards the open dimer state, lowering its affinity for the GET1-GET2 receptor, and returning it to the cytosol to initiate a new round of targeting. Cooperates with the HDEL receptor ERD2 to mediate the ATP-dependent retrieval of resident ER proteins that contain a C-terminal H-D-E-L retention signal from the Golgi to the ER. Involved in low-level resistance to the oxyanions arsenite and arsenate, and in heat tolerance. This Lachancea thermotolerans (strain ATCC 56472 / CBS 6340 / NRRL Y-8284) (Yeast) protein is ATPase GET3.